The chain runs to 422 residues: 3-phosphoshikimate 1-carboxyvinyltransferase (422 aa).

3-phosphoshikimate is bound by residues Lys-24, Ser-25, and Arg-29. Position 24 (Lys-24) interacts with phosphoenolpyruvate. 2 residues coordinate phosphoenolpyruvate: Gly-93 and Arg-121. 3-phosphoshikimate is bound by residues Ser-164, Ser-165, Gln-166, Glu-308, and His-335. Gln-166 contacts phosphoenolpyruvate. Glu-308 serves as the catalytic Proton acceptor. Positions 339, 380, and 405 each coordinate phosphoenolpyruvate.

Belongs to the EPSP synthase family. As to quaternary structure, monomer.

It is found in the cytoplasm. It carries out the reaction 3-phosphoshikimate + phosphoenolpyruvate = 5-O-(1-carboxyvinyl)-3-phosphoshikimate + phosphate. It participates in metabolic intermediate biosynthesis; chorismate biosynthesis; chorismate from D-erythrose 4-phosphate and phosphoenolpyruvate: step 6/7. In terms of biological role, catalyzes the transfer of the enolpyruvyl moiety of phosphoenolpyruvate (PEP) to the 5-hydroxyl of shikimate-3-phosphate (S3P) to produce enolpyruvyl shikimate-3-phosphate and inorganic phosphate. The protein is 3-phosphoshikimate 1-carboxyvinyltransferase of Saccharopolyspora erythraea (strain ATCC 11635 / DSM 40517 / JCM 4748 / NBRC 13426 / NCIMB 8594 / NRRL 2338).